The following is a 338-amino-acid chain: NLP effector protein 6 (338 aa).

The N-terminal stretch at 1 to 19 (MRFTTIFWISLTVLATVRA) is a signal peptide. Residues 68-119 (LTLSPSASSPAKRNVTLPPDTTMRPDPRQTEPPTEAPTPASTPAPTPDPGPW) form a disordered region. N-linked (GlcNAc...) asparagine glycosylation occurs at asparagine 81. The segment covering 101–117 (TEAPTPASTPAPTPDPG) has biased composition (pro residues). The Conserved undecapeptide motif I motif lies at 205–215 (AIMYSWYFPKD). Positions 222-227 (GHRHDW) match the Hepta-peptide GHRHDWE motif II motif.

This sequence belongs to the Necrosis inducing protein (NPP1) family.

Its subcellular location is the secreted. In terms of biological role, secreted effector that contributes strongly to virulence during infection by P.capsici. Causes large necrotic areas in both host C.annuum and non-host N.benthamiana. This chain is NLP effector protein 6, found in Phytophthora capsici.